Reading from the N-terminus, the 344-residue chain is Dihydroorotate dehydrogenase (quinone) (344 aa).

FMN-binding positions include 65 to 69 (AGLDK) and T89. Residue K69 participates in substrate binding. 114–118 (NRMGF) is a substrate binding site. FMN contacts are provided by N142 and N175. N175 contacts substrate. S178 acts as the Nucleophile in catalysis. N180 contacts substrate. The FMN site is built by K220 and T248. A substrate-binding site is contributed by 249–250 (NT). Residues G271, G300, and 321 to 322 (YT) contribute to the FMN site.

This sequence belongs to the dihydroorotate dehydrogenase family. Type 2 subfamily. As to quaternary structure, monomer. Requires FMN as cofactor.

It localises to the cell membrane. It catalyses the reaction (S)-dihydroorotate + a quinone = orotate + a quinol. Its pathway is pyrimidine metabolism; UMP biosynthesis via de novo pathway; orotate from (S)-dihydroorotate (quinone route): step 1/1. Catalyzes the conversion of dihydroorotate to orotate with quinone as electron acceptor. The sequence is that of Dihydroorotate dehydrogenase (quinone) from Paraburkholderia phymatum (strain DSM 17167 / CIP 108236 / LMG 21445 / STM815) (Burkholderia phymatum).